The following is a 354-amino-acid chain: MAIDENKQKALAAALGQIEKQFGKGSIMRLGEDRSMDVETISTGSLSLDIALGAGGLPMGRIVEIYGPESSGKTTLTLQVIAAAQREGKTCAFIDAEHALDPIYARKLGVDIDNLLCSQPDTGEQALEICDALARSGAVDVIVVDSVAALTPKAEIEGEIGDSHMGLAARMMSQAMRKLAGNLKQSNTLLIFINQIRMKIGVMFGNPETTTGGNALKFYASVRLDIRRIGAVKEGENVVGSETRVKVVKNKIAAPFKQAEFQILYGEGINFYGELVDLGVKEKLIEKAGAWYSYNGEKIGQGKANATAWLKENPATAKEIEKKVRELLLSNQDSTPDFSVDDNGEGVKETNEDF.

67–74 lines the ATP pocket; sequence GPESSGKT. Residues 331–354 form a disordered region; sequence NQDSTPDFSVDDNGEGVKETNEDF. Over residues 345–354 the composition is skewed to basic and acidic residues; it reads EGVKETNEDF.

The protein belongs to the RecA family.

It is found in the cytoplasm. In terms of biological role, can catalyze the hydrolysis of ATP in the presence of single-stranded DNA, the ATP-dependent uptake of single-stranded DNA by duplex DNA, and the ATP-dependent hybridization of homologous single-stranded DNAs. It interacts with LexA causing its activation and leading to its autocatalytic cleavage. The polypeptide is Protein RecA (Citrobacter koseri (strain ATCC BAA-895 / CDC 4225-83 / SGSC4696)).